A 208-amino-acid chain; its full sequence is Uracil phosphoribosyltransferase (208 aa).

5-phospho-alpha-D-ribose 1-diphosphate is bound by residues R78, R103, and 130–138 (DPMLATGGS). Uracil is bound by residues I193 and 198 to 200 (GDA). D199 contacts 5-phospho-alpha-D-ribose 1-diphosphate.

This sequence belongs to the UPRTase family. It depends on Mg(2+) as a cofactor.

It carries out the reaction UMP + diphosphate = 5-phospho-alpha-D-ribose 1-diphosphate + uracil. The protein operates within pyrimidine metabolism; UMP biosynthesis via salvage pathway; UMP from uracil: step 1/1. Its activity is regulated as follows. Allosterically activated by GTP. Catalyzes the conversion of uracil and 5-phospho-alpha-D-ribose 1-diphosphate (PRPP) to UMP and diphosphate. The sequence is that of Uracil phosphoribosyltransferase from Shewanella woodyi (strain ATCC 51908 / MS32).